Consider the following 327-residue polypeptide: S-adenosylmethionine/S-adenosylhomocysteine transporter (327 aa).

10 helical membrane passes run Cys-22–Leu-42, Leu-53–Cys-73, Ile-85–Ile-105, Thr-114–Leu-134, Leu-143–Glu-163, Val-165–Leu-185, Ser-202–Ile-222, Leu-240–Phe-260, Phe-271–Leu-291, and Ser-294–Tyr-314. An EamA 1 domain is found at Phe-34–Leu-157. Residues Gly-189–Ile-313 form the EamA 2 domain.

The protein belongs to the drug/metabolite transporter (DMT) superfamily. 10 TMS drug/metabolite exporter (DME) (TC 2.A.7.3) family.

The protein resides in the cell membrane. Its function is as follows. Transports S-adenosylmethionine (SAM) and S-adenosylhomocysteine (SAH). Allows bacteria to acquire SAM from the eukaryotic host cell and to likely remove the toxic by-product SAH. The sequence is that of S-adenosylmethionine/S-adenosylhomocysteine transporter from Chlamydia trachomatis serovar D (strain ATCC VR-885 / DSM 19411 / UW-3/Cx).